The chain runs to 290 residues: Formamidopyrimidine-DNA glycosylase (290 aa).

Catalysis depends on P2, which acts as the Schiff-base intermediate with DNA. E3 serves as the catalytic Proton donor. The Proton donor; for beta-elimination activity role is filled by K58. DNA contacts are provided by H98, R126, and R171. An FPG-type zinc finger spans residues 256–290 (FVYDRAGLPCRVCATPVRQIVQGQRSTFYCPKCQH). Residue R280 is the Proton donor; for delta-elimination activity of the active site.

Belongs to the FPG family. As to quaternary structure, monomer. It depends on Zn(2+) as a cofactor.

It catalyses the reaction Hydrolysis of DNA containing ring-opened 7-methylguanine residues, releasing 2,6-diamino-4-hydroxy-5-(N-methyl)formamidopyrimidine.. The catalysed reaction is 2'-deoxyribonucleotide-(2'-deoxyribose 5'-phosphate)-2'-deoxyribonucleotide-DNA = a 3'-end 2'-deoxyribonucleotide-(2,3-dehydro-2,3-deoxyribose 5'-phosphate)-DNA + a 5'-end 5'-phospho-2'-deoxyribonucleoside-DNA + H(+). In terms of biological role, involved in base excision repair of DNA damaged by oxidation or by mutagenic agents. Acts as a DNA glycosylase that recognizes and removes damaged bases. Has a preference for oxidized purines, such as 7,8-dihydro-8-oxoguanine (8-oxoG). Has AP (apurinic/apyrimidinic) lyase activity and introduces nicks in the DNA strand. Cleaves the DNA backbone by beta-delta elimination to generate a single-strand break at the site of the removed base with both 3'- and 5'-phosphates. The polypeptide is Formamidopyrimidine-DNA glycosylase (Cupriavidus taiwanensis (strain DSM 17343 / BCRC 17206 / CCUG 44338 / CIP 107171 / LMG 19424 / R1) (Ralstonia taiwanensis (strain LMG 19424))).